Consider the following 76-residue polypeptide: Large ribosomal subunit protein eL20 (76 aa).

This sequence belongs to the eukaryotic ribosomal protein eL20 family. As to quaternary structure, part of the 50S ribosomal subunit. Binds 23S rRNA.

This Methanocaldococcus jannaschii (strain ATCC 43067 / DSM 2661 / JAL-1 / JCM 10045 / NBRC 100440) (Methanococcus jannaschii) protein is Large ribosomal subunit protein eL20.